The following is a 970-amino-acid chain: Type III restriction-modification enzyme EcoP15I Res subunit (970 aa).

A helicase-like domain region spans residues 75–540 (AKSNIIDVSM…EVGRGLRLPV (466 aa)). T91, G122, F126, and D226 together coordinate AMP. The segment at 894–918 (TYSPDFAYVVKTAEGDYLNFIIETK) is endonuclease domain.

The protein belongs to the type III restriction-modification system Res protein family. As to quaternary structure, a heterotetramer with stoichiometry Res(2)Mod(2). A heterotrimer with stoichiometry Res(1)Mod(2). The cofactor is Mg(2+). Requires S-adenosyl-L-methionine as cofactor.

The catalysed reaction is Endonucleolytic cleavage of DNA to give specific double-stranded fragments with terminal 5'-phosphates.. In terms of biological role, a type III restriction enzyme that recognizes 2 inversely oriented double-stranded sequences 5'-CAGCAG-3' and cleaves DNA 25-27 base pairs downstream of one site. DNA restriction requires both the Res and Mod subunits. DNA topology affects its action; relaxed and negatively supercoiled DNA are digested but positively supercoiled DNA is not a good substrate. Interacts with DNA approximately one half-turn downstream of the recognition site. After binding to one recognition site undergoes random one-dimensional diffusion along DNA until it collides with a stationary enzyme bound to the second DNA site, which is when DNA cleavage occurs. This chain is Type III restriction-modification enzyme EcoP15I Res subunit, found in Escherichia coli.